The chain runs to 322 residues: tRNA uridine(34) hydroxylase (322 aa).

The Rhodanese domain occupies Q125–Q219. Residue C179 is the Cysteine persulfide intermediate of the active site.

The protein belongs to the TrhO family.

It catalyses the reaction uridine(34) in tRNA + AH2 + O2 = 5-hydroxyuridine(34) in tRNA + A + H2O. Functionally, catalyzes oxygen-dependent 5-hydroxyuridine (ho5U) modification at position 34 in tRNAs. This Bacillus velezensis (strain DSM 23117 / BGSC 10A6 / LMG 26770 / FZB42) (Bacillus amyloliquefaciens subsp. plantarum) protein is tRNA uridine(34) hydroxylase.